The chain runs to 842 residues: Elongation factor G, mitochondrial (842 aa).

The transit peptide at 1 to 58 directs the protein to the mitochondrion; sequence MVAIPRVAAARSLARQLARQSLRTTSFASAPVRIAIASTPLARSPSSFRSLSSSTRRS. The 306-residue stretch at 93–398 folds into the tr-type G domain; the sequence is VRQRNVGISA…GVCSYLPNPA (306 aa). Residues 102-109, 196-200, and 250-253 contribute to the GTP site; these read AHIDSGKT, DTPGH, and NKMD. The segment at 423–442 is disordered; that stretch reads AGEDQEAAAEARKNAAPPVL.

This sequence belongs to the TRAFAC class translation factor GTPase superfamily. Classic translation factor GTPase family. EF-G/EF-2 subfamily.

Its subcellular location is the mitochondrion. Its pathway is protein biosynthesis; polypeptide chain elongation. Mitochondrial GTPase that catalyzes the GTP-dependent ribosomal translocation step during translation elongation. During this step, the ribosome changes from the pre-translocational (PRE) to the post-translocational (POST) state as the newly formed A-site-bound peptidyl-tRNA and P-site-bound deacylated tRNA move to the P and E sites, respectively. Catalyzes the coordinated movement of the two tRNA molecules, the mRNA and conformational changes in the ribosome. In Mycosarcoma maydis (Corn smut fungus), this protein is Elongation factor G, mitochondrial.